Here is a 719-residue protein sequence, read N- to C-terminus: Leucine-rich repeat and fibronectin type-III domain-containing protein 5 (719 aa).

The signal sequence occupies residues Met-1–Ala-17. The 34-residue stretch at Gln-18–Arg-51 folds into the LRRNT domain. Topologically, residues Gln-18–Met-529 are extracellular. 7 LRR repeats span residues Arg-52–Asn-73, Ser-76–Asp-97, Asn-100–Gly-121, Asn-124–Asp-145, Ala-148–Lys-169, Ser-172–His-193, and Lys-196–Gln-217. An N-linked (GlcNAc...) asparagine glycan is attached at Asn-73. The region spanning Asn-240–Pro-286 is the LRRCT domain. The 87-residue stretch at Pro-287–His-373 folds into the Ig-like domain. Cysteines 308 and 357 form a disulfide. Residues Asn-330, Asn-339, Asn-382, Asn-406, and Asn-452 are each glycosylated (N-linked (GlcNAc...) asparagine). The tract at residues Asn-385–Met-416 is disordered. The segment covering Gly-393–Gly-412 has biased composition (low complexity). The 90-residue stretch at Thr-414–Val-503 folds into the Fibronectin type-III domain. The helical transmembrane segment at Ile-530–Ile-550 threads the bilayer. Topologically, residues Arg-551–Ile-719 are cytoplasmic. Residues Ser-614–Ser-627 are compositionally biased toward low complexity. The tract at residues Ser-614–Ile-719 is disordered. Composition is skewed to polar residues over residues Ala-628–Gln-641, Glu-654–Gln-677, and Leu-702–Thr-713.

This sequence belongs to the LRFN family. In terms of assembly, can form heteromeric complexes with LRFN1, LRFN2, LRFN3 and LFRN4. Able to form homomeric complexes across cell junctions, between adjacent cells. Does not interact with DLG1, DLG2 or DLG3. Does not interact with DLG4. In terms of processing, glycosylated. In terms of tissue distribution, predominantly expressed in the brain, with a weak, but broad expression in the cerebral cortex and diencephalic nuclei. Strongly expressed in both the pyramidal layer and the dentate gyrus of the hippocampus. Also detected in other parts of the central nervous system, including the olfactory bulb, pons, cerebellum, and medulla oblongata, as well as in the peripheral nervous system, such as the ganglia of cranial nerves and the dorsal root ganglion during gestation.

The protein localises to the membrane. Functionally, cell adhesion molecule that mediates homophilic cell-cell adhesion in a Ca(2+)-independent manner. Promotes neurite outgrowth in hippocampal neurons. In Mus musculus (Mouse), this protein is Leucine-rich repeat and fibronectin type-III domain-containing protein 5 (Lrfn5).